The sequence spans 145 residues: 3-dehydroquinate dehydratase (145 aa).

Residue Tyr-23 is the Proton acceptor of the active site. Substrate is bound by residues Asn-75, His-81, and Asp-88. Residue His-101 is the Proton donor of the active site. Substrate is bound by residues 102 to 103 and Arg-112; that span reads LS.

This sequence belongs to the type-II 3-dehydroquinase family. Homododecamer.

It catalyses the reaction 3-dehydroquinate = 3-dehydroshikimate + H2O. Its pathway is metabolic intermediate biosynthesis; chorismate biosynthesis; chorismate from D-erythrose 4-phosphate and phosphoenolpyruvate: step 3/7. In terms of biological role, catalyzes a trans-dehydration via an enolate intermediate. This is 3-dehydroquinate dehydratase from Legionella pneumophila (strain Paris).